A 382-amino-acid chain; its full sequence is V-type proton ATPase subunit C 1 (382 aa).

T2 bears the N-acetylthreonine mark.

Belongs to the V-ATPase C subunit family. V-ATPase is a heteromultimeric enzyme made up of two complexes: the ATP-hydrolytic V1 complex and the proton translocation V0 complex. The V1 complex consists of three catalytic AB heterodimers that form a heterohexamer, three peripheral stalks each consisting of EG heterodimers, one central rotor including subunits D and F, and the regulatory subunits C and H. The proton translocation complex V0 consists of the proton transport subunit a, a ring of proteolipid subunits c9c'', rotary subunit d, subunits e and f, and two accessory subunits.

Its function is as follows. Subunit of the V1 complex of vacuolar(H+)-ATPase (V-ATPase), a multisubunit enzyme composed of a peripheral complex (V1) that hydrolyzes ATP and a membrane integral complex (V0) that translocates protons. V-ATPase is responsible for acidifying and maintaining the pH of intracellular compartments and in some cell types, is targeted to the plasma membrane, where it is responsible for acidifying the extracellular environment. Subunit C is necessary for the assembly of the catalytic sector of the enzyme and is likely to have a specific function in its catalytic activity. In Xenopus laevis (African clawed frog), this protein is V-type proton ATPase subunit C 1 (atp6v1c1).